The sequence spans 342 residues: Cytochrome c oxidase subunit 2 (342 aa).

Residues 1-22 (MKLWKTASRFLPLSFLTLFLTG) form the signal peptide. Residue Cys23 is the site of N-palmitoyl cysteine attachment. Residue Cys23 is the site of S-diacylglycerol cysteine attachment. The Extracellular segment spans residues 23 to 50 (CLGEENLTALDPKGPQAQWIYDNMILSI). Positions 23–249 (CLGEENLTAL…MSAEVEEPTE (227 aa)) are cytochrome c oxidase subunit II. A helical membrane pass occupies residues 51–69 (IVMALVSIVVFAIFFIILA). At 70 to 89 (KYRRKPGDDEIPKQVHGNTA) the chain is on the cytoplasmic side. A helical transmembrane segment spans residues 90-108 (LEITWTVIPIILLVILAVP). The Extracellular portion of the chain corresponds to 109–342 (TITGTFMFAD…AYLRSLKVME (234 aa)). The Cu cation site is built by His175, Cys210, Cys214, and His218. Residues 250–342 (TLANQGRQVF…AYLRSLKVME (93 aa)) enclose the Cytochrome c domain. Heme c is bound by residues Cys264, Cys267, His268, and Met317.

The protein belongs to the cytochrome c oxidase subunit 2 family. Cu cation serves as cofactor. Heme c is required as a cofactor.

The protein resides in the cell membrane. The catalysed reaction is 4 Fe(II)-[cytochrome c] + O2 + 8 H(+)(in) = 4 Fe(III)-[cytochrome c] + 2 H2O + 4 H(+)(out). Functionally, subunits I and II form the functional core of the enzyme complex. Electrons originating in cytochrome c are transferred via heme a and Cu(A) to the binuclear center formed by heme a3 and Cu(B). In Alkalihalophilus pseudofirmus (strain ATCC BAA-2126 / JCM 17055 / OF4) (Bacillus pseudofirmus), this protein is Cytochrome c oxidase subunit 2 (ctaC).